The following is a 257-amino-acid chain: Imidazole glycerol phosphate synthase subunit HisF (257 aa).

Residues Asp12 and Asp131 contribute to the active site.

This sequence belongs to the HisA/HisF family. In terms of assembly, heterodimer of HisH and HisF.

The protein localises to the cytoplasm. It catalyses the reaction 5-[(5-phospho-1-deoxy-D-ribulos-1-ylimino)methylamino]-1-(5-phospho-beta-D-ribosyl)imidazole-4-carboxamide + L-glutamine = D-erythro-1-(imidazol-4-yl)glycerol 3-phosphate + 5-amino-1-(5-phospho-beta-D-ribosyl)imidazole-4-carboxamide + L-glutamate + H(+). The protein operates within amino-acid biosynthesis; L-histidine biosynthesis; L-histidine from 5-phospho-alpha-D-ribose 1-diphosphate: step 5/9. Its function is as follows. IGPS catalyzes the conversion of PRFAR and glutamine to IGP, AICAR and glutamate. The HisF subunit catalyzes the cyclization activity that produces IGP and AICAR from PRFAR using the ammonia provided by the HisH subunit. The sequence is that of Imidazole glycerol phosphate synthase subunit HisF from Rhodococcus erythropolis (strain PR4 / NBRC 100887).